The chain runs to 542 residues: Zinc finger protein 280A (542 aa).

The segment at 66–185 (VTPGSNSRRK…RDSKRVKLRD (120 aa)) is disordered. Polar residues predominate over residues 107–122 (EGRSTDSPVTMKSSSE). Residues 128 to 143 (SSPQVVSPSSSDSLPP) show a composition bias toward low complexity. Basic and acidic residues predominate over residues 161–185 (SSPDSKRLSTSDINSRDSKRVKLRD). C2H2-type zinc fingers lie at residues 334–357 (TTCQ…DSVH), 364–387 (AVCK…KDHH), 423–445 (LLCL…CWRH), and 451–474 (LQCS…TKDH). The span at 499 to 520 (QPGSSGMASVIVSNTDPQSSPV) shows a compositional bias: polar residues. A disordered region spans residues 499-542 (QPGSSGMASVIVSNTDPQSSPVKTKKKTAMNTRDSRLPCSKDSS).

It is found in the nucleus. Functionally, may function as a transcription factor. This chain is Zinc finger protein 280A (ZNF280A), found in Homo sapiens (Human).